Here is a 149-residue protein sequence, read N- to C-terminus: Glucosamine 6-phosphate N-acetyltransferase (149 aa).

Residues 7–149 enclose the N-acetyltransferase domain; that stretch reads YTFRKLKLTD…DGGVEMVCRF (143 aa). Substrate-binding positions include threonine 29, 76 to 79, and 88 to 90; these read KLIH and EDI. Acetyl-CoA contacts are provided by residues 90 to 92 and 98 to 103; these read ISV and GKKLGY. Residues 119–120 and aspartate 124 contribute to the substrate site; that span reads YK. Residue 133 to 135 coordinates acetyl-CoA; sequence YEK. Arginine 148 contributes to the substrate binding site.

It belongs to the acetyltransferase family. GNA1 subfamily.

It catalyses the reaction D-glucosamine 6-phosphate + acetyl-CoA = N-acetyl-D-glucosamine 6-phosphate + CoA + H(+). Its pathway is nucleotide-sugar biosynthesis; UDP-N-acetyl-alpha-D-glucosamine biosynthesis; N-acetyl-alpha-D-glucosamine 1-phosphate from alpha-D-glucosamine 6-phosphate (route I): step 1/2. The protein is Glucosamine 6-phosphate N-acetyltransferase (GNA1) of Candida albicans (Yeast).